The chain runs to 326 residues: Eukaryotic translation initiation factor 3 subunit I (326 aa).

5 WD repeats span residues 8-47, 50-89, 145-184, 188-227, and 285-326; these read GHER…RLGT, GHQG…VIAS, MTES…KVVD, DHSA…CLKT, and GHFG…NIFE.

Belongs to the eIF-3 subunit I family. In terms of assembly, component of the eukaryotic translation initiation factor 3 (eIF-3) complex. The eIF-3 complex interacts with pix.

The protein localises to the cytoplasm. Its function is as follows. Component of the eukaryotic translation initiation factor 3 (eIF-3) complex, which is involved in protein synthesis of a specialized repertoire of mRNAs and, together with other initiation factors, stimulates binding of mRNA and methionyl-tRNAi to the 40S ribosome. The eIF-3 complex specifically targets and initiates translation of a subset of mRNAs involved in cell proliferation. This Drosophila erecta (Fruit fly) protein is Eukaryotic translation initiation factor 3 subunit I.